The primary structure comprises 321 residues: Cytochrome c biogenesis protein CcsA (321 aa).

A run of 7 helical transmembrane segments spans residues 9–29 (ILTHISFSTISIVITIHLITL), 44–64 (GMIATFFCITGFLVSRWASSG), 68–88 (LSNLYESLIFLSWALYILHMI), 143–163 (MLLSYATLLCGSLLSAALLMI), 226–246 (VISLGFTLLTIGILCGAVWAN), 260–274 (TWAFITWTIFAIYLH), and 289–309 (VASIGFLIIWICYFGINLLGI).

Belongs to the CcmF/CycK/Ccl1/NrfE/CcsA family. In terms of assembly, may interact with Ccs1.

Its subcellular location is the plastid. The protein localises to the chloroplast thylakoid membrane. Functionally, required during biogenesis of c-type cytochromes (cytochrome c6 and cytochrome f) at the step of heme attachment. This Oryza sativa (Rice) protein is Cytochrome c biogenesis protein CcsA.